The chain runs to 463 residues: tRNA-2-methylthio-N(6)-dimethylallyladenosine synthase (463 aa).

One can recognise an MTTase N-terminal domain in the interval 18-136 (RKLYIETYGC…LPNLVGAAEQ (119 aa)). Positions 27, 63, 100, 174, 178, and 181 each coordinate [4Fe-4S] cluster. The region spanning 160–392 (GGVHINGFVS…IALQNRLSEE (233 aa)) is the Radical SAM core domain. The TRAM domain maps to 395 to 458 (KRDIGKTFEV…SATLFGEVVE (64 aa)).

The protein belongs to the methylthiotransferase family. MiaB subfamily. As to quaternary structure, monomer. [4Fe-4S] cluster is required as a cofactor.

The protein resides in the cytoplasm. It carries out the reaction N(6)-dimethylallyladenosine(37) in tRNA + (sulfur carrier)-SH + AH2 + 2 S-adenosyl-L-methionine = 2-methylsulfanyl-N(6)-dimethylallyladenosine(37) in tRNA + (sulfur carrier)-H + 5'-deoxyadenosine + L-methionine + A + S-adenosyl-L-homocysteine + 2 H(+). In terms of biological role, catalyzes the methylthiolation of N6-(dimethylallyl)adenosine (i(6)A), leading to the formation of 2-methylthio-N6-(dimethylallyl)adenosine (ms(2)i(6)A) at position 37 in tRNAs that read codons beginning with uridine. The chain is tRNA-2-methylthio-N(6)-dimethylallyladenosine synthase from Porphyromonas gingivalis (strain ATCC BAA-308 / W83).